We begin with the raw amino-acid sequence, 396 residues long: Tyrosine--tRNA ligase (396 aa).

The 'HIGH' region motif lies at 39–48 (PTAPDLHLGH). Positions 223 to 227 (KMSKS) match the 'KMSKS' region motif. ATP is bound at residue K226. Residues 334-395 (LPVPQLLKQA…GKRKFARVTV (62 aa)) enclose the S4 RNA-binding domain.

It belongs to the class-I aminoacyl-tRNA synthetase family. TyrS type 2 subfamily. As to quaternary structure, homodimer.

The protein localises to the cytoplasm. It catalyses the reaction tRNA(Tyr) + L-tyrosine + ATP = L-tyrosyl-tRNA(Tyr) + AMP + diphosphate + H(+). In terms of biological role, catalyzes the attachment of tyrosine to tRNA(Tyr) in a two-step reaction: tyrosine is first activated by ATP to form Tyr-AMP and then transferred to the acceptor end of tRNA(Tyr). The protein is Tyrosine--tRNA ligase of Thiobacillus denitrificans (strain ATCC 25259 / T1).